A 249-amino-acid polypeptide reads, in one-letter code: Ubiquinone biosynthesis O-methyltransferase (249 aa).

Residues R41, G72, D93, and M136 each coordinate S-adenosyl-L-methionine.

The protein belongs to the methyltransferase superfamily. UbiG/COQ3 family.

It catalyses the reaction a 3-demethylubiquinol + S-adenosyl-L-methionine = a ubiquinol + S-adenosyl-L-homocysteine + H(+). The enzyme catalyses a 3-(all-trans-polyprenyl)benzene-1,2-diol + S-adenosyl-L-methionine = a 2-methoxy-6-(all-trans-polyprenyl)phenol + S-adenosyl-L-homocysteine + H(+). It functions in the pathway cofactor biosynthesis; ubiquinone biosynthesis. Functionally, O-methyltransferase that catalyzes the 2 O-methylation steps in the ubiquinone biosynthetic pathway. In Methylobacterium sp. (strain 4-46), this protein is Ubiquinone biosynthesis O-methyltransferase.